The primary structure comprises 241 residues: Putative lipoprotein YvcA (241 aa).

Positions 1–18 (MKKIIFICFSLLLALTGG) are cleaved as a signal peptide. Cysteine 19 carries the N-palmitoyl cysteine lipid modification. Residue cysteine 19 is the site of S-diacylglycerol cysteine attachment. The segment at 22 to 48 (NDNDKNSTNDNKTEAVKPKDMDPKDLP) is disordered. A compositionally biased stretch (basic and acidic residues) spans 23–46 (DNDKNSTNDNKTEAVKPKDMDPKD).

The protein localises to the cell membrane. Functionally, required for complex colony architecture. This is Putative lipoprotein YvcA (yvcA) from Bacillus subtilis (strain 168).